The sequence spans 190 residues: Segregation and condensation protein B (190 aa).

The protein belongs to the ScpB family. In terms of assembly, homodimer. Homodimerization may be required to stabilize the binding of ScpA to the Smc head domains. Component of a cohesin-like complex composed of ScpA, ScpB and the Smc homodimer, in which ScpA and ScpB bind to the head domain of Smc. The presence of the three proteins is required for the association of the complex with DNA.

It is found in the cytoplasm. In terms of biological role, participates in chromosomal partition during cell division. May act via the formation of a condensin-like complex containing Smc and ScpA that pull DNA away from mid-cell into both cell halves. The chain is Segregation and condensation protein B from Bacillus mycoides (strain KBAB4) (Bacillus weihenstephanensis).